Here is a 48-residue protein sequence, read N- to C-terminus: ATP synthase protein 8 (48 aa).

The helical transmembrane segment at leucine 13–isoleucine 35 threads the bilayer.

This sequence belongs to the ATPase protein 8 family. In terms of assembly, F-type ATPases have 2 components, CF(1) - the catalytic core - and CF(0) - the membrane proton channel. In yeast, the dimeric form of ATP synthase consists of 18 polypeptides: alpha, beta, gamma, delta, epsilon, 4 (B), 5 (OSCP), 6 (A), 8, 9 (C), d, E (Tim11), f, g, h, i, j and k.

Its subcellular location is the mitochondrion membrane. Its function is as follows. Mitochondrial membrane ATP synthase (F(1)F(0) ATP synthase or Complex V) produces ATP from ADP in the presence of a proton gradient across the membrane which is generated by electron transport complexes of the respiratory chain. F-type ATPases consist of two structural domains, F(1) - containing the extramembraneous catalytic core and F(0) - containing the membrane proton channel, linked together by a central stalk and a peripheral stalk. During catalysis, ATP synthesis in the catalytic domain of F(1) is coupled via a rotary mechanism of the central stalk subunits to proton translocation. Part of the complex F(0) domain. Minor subunit located with subunit a in the membrane. This chain is ATP synthase protein 8 (ATP8), found in Eremothecium gossypii (strain ATCC 10895 / CBS 109.51 / FGSC 9923 / NRRL Y-1056) (Yeast).